The following is a 545-amino-acid chain: MTEPFTPPHRLSAWSTLENHAARLRTMRIAELFEHDAARFATLSFGHRGLLLDLSKQSIDAPALAALVDLAGQARLPDGIEALFAGEHLNFTEDRAVLHMALRGACAAPLEDAATLAQSQQRMRAFTVALRSGTMTGATGKPIRLVVNLGIGGSDLGPRMAAQALVPTGLRATPEVRFVANIDRRELDEALADADPASTLFVVSSKSFATAETLANAQAARAWLQAGLGAGCDPALHFTAVSNATDAAAAFGIPAERVFPLPEWVGGRYSVWSTIGLPLMIAIGASEFDAFLAGARAMDEHFRTAPPGENLPVLMGLAGLWNTDFLGIESLALLPYAHGLRSFAAWLQQLEMESNGKRCLRDGSGSVIHTSPIVWGGVGTVGQHAFHQLFYQGTRRVALDFIVPVAAADDVSQRSLVENAFAQSAALMSGRDLDTALASLRAKGLAESEAAVLAPHLVCPGNQPSTTVLLPALDAFSLGQLMALYEHKVFVQGWIWGINSFDQYGVELGKEMARSLSAGSGENHDASTAGLMAAAEAMRRTPDRS.

E353 (proton donor) is an active-site residue. Catalysis depends on residues H384 and K510.

This sequence belongs to the GPI family.

The protein resides in the cytoplasm. The catalysed reaction is alpha-D-glucose 6-phosphate = beta-D-fructose 6-phosphate. The protein operates within carbohydrate biosynthesis; gluconeogenesis. It participates in carbohydrate degradation; glycolysis; D-glyceraldehyde 3-phosphate and glycerone phosphate from D-glucose: step 2/4. Functionally, catalyzes the reversible isomerization of glucose-6-phosphate to fructose-6-phosphate. The protein is Glucose-6-phosphate isomerase of Aromatoleum aromaticum (strain DSM 19018 / LMG 30748 / EbN1) (Azoarcus sp. (strain EbN1)).